A 211-amino-acid polypeptide reads, in one-letter code: Phosphoribosyl-dephospho-CoA transferase (211 aa).

Active-site residues include aspartate 136 and aspartate 138.

This sequence belongs to the MdcG family.

It carries out the reaction apo-[malonate decarboxylase ACP] + 2'-(5''-triphospho-alpha-D-ribosyl)-3'-dephospho-CoA = holo-[malonate decarboxylase ACP] + diphosphate. Transfers 2'-(5-triphosphoribosyl)-3'-dephosphocoenzyme-A to the apo-[acyl-carrier-protein] of the malonate decarboxylase to yield holo-[acyl-carrier-protein]. The polypeptide is Phosphoribosyl-dephospho-CoA transferase (Pseudomonas syringae pv. tomato (strain ATCC BAA-871 / DC3000)).